We begin with the raw amino-acid sequence, 231 residues long: uncharacterized protein (231 aa).

One can recognise a Response regulatory domain in the interval 4–116 (RILVVEDDED…ELHARVIAQL (113 aa)). D52 is subject to 4-aspartylphosphate. The segment at residues 129 to 230 (EETFLIGGKL…EWGRGYRFGA (102 aa)) is a DNA-binding region (ompR/PhoB-type).

Post-translationally, phosphorylated by YrkQ.

It is found in the cytoplasm. Its function is as follows. Member of the two-component regulatory system YrkQ/YrkP. This is an uncharacterized protein from Bacillus subtilis (strain 168).